A 136-amino-acid polypeptide reads, in one-letter code: Large ribosomal subunit protein uL13 (136 aa).

The protein belongs to the universal ribosomal protein uL13 family. In terms of assembly, part of the 50S ribosomal subunit.

This protein is one of the early assembly proteins of the 50S ribosomal subunit, although it is not seen to bind rRNA by itself. It is important during the early stages of 50S assembly. This Thermoplasma volcanium (strain ATCC 51530 / DSM 4299 / JCM 9571 / NBRC 15438 / GSS1) protein is Large ribosomal subunit protein uL13.